The chain runs to 163 residues: NADH-quinone oxidoreductase subunit I (163 aa).

2 4Fe-4S ferredoxin-type domains span residues 53-83 (LRRY…IEAG) and 94-123 (VRYD…EGPN). Positions 63, 66, 69, 73, 103, 106, 109, and 113 each coordinate [4Fe-4S] cluster.

Belongs to the complex I 23 kDa subunit family. As to quaternary structure, NDH-1 is composed of 14 different subunits. Subunits NuoA, H, J, K, L, M, N constitute the membrane sector of the complex. It depends on [4Fe-4S] cluster as a cofactor.

It localises to the cell inner membrane. It catalyses the reaction a quinone + NADH + 5 H(+)(in) = a quinol + NAD(+) + 4 H(+)(out). NDH-1 shuttles electrons from NADH, via FMN and iron-sulfur (Fe-S) centers, to quinones in the respiratory chain. The immediate electron acceptor for the enzyme in this species is believed to be ubiquinone. Couples the redox reaction to proton translocation (for every two electrons transferred, four hydrogen ions are translocated across the cytoplasmic membrane), and thus conserves the redox energy in a proton gradient. The sequence is that of NADH-quinone oxidoreductase subunit I from Brucella melitensis biotype 1 (strain ATCC 23456 / CCUG 17765 / NCTC 10094 / 16M).